The primary structure comprises 277 residues: Bifunctional protein FolD (277 aa).

Residues 164–166 (GRS), S189, and T230 contribute to the NADP(+) site.

Belongs to the tetrahydrofolate dehydrogenase/cyclohydrolase family. Homodimer.

The enzyme catalyses (6R)-5,10-methylene-5,6,7,8-tetrahydrofolate + NADP(+) = (6R)-5,10-methenyltetrahydrofolate + NADPH. It carries out the reaction (6R)-5,10-methenyltetrahydrofolate + H2O = (6R)-10-formyltetrahydrofolate + H(+). It functions in the pathway one-carbon metabolism; tetrahydrofolate interconversion. In terms of biological role, catalyzes the oxidation of 5,10-methylenetetrahydrofolate to 5,10-methenyltetrahydrofolate and then the hydrolysis of 5,10-methenyltetrahydrofolate to 10-formyltetrahydrofolate. This is Bifunctional protein FolD from Clostridium perfringens (strain 13 / Type A).